The primary structure comprises 608 residues: MCGIVGILGREPVAEQLVDSLKRLEYRGYDSAGVATLEGRHLERRRAEGKLKNLEKRLEAEPLKGTTGIGHTRWATHGKPTVNNAHPHATERVAVVHNGIIENFRELREELEKNGTVFHTETDTEIVLHLVDDLLTRGNKPVEAVKLALARLRGAFALGFIFAGDNDLMIGARNGPPLAIGYGDGEMYLGSDAIALGPFTDTISYLEDGDWVVLTRNSATIFDKDGHAVQREKIKHAASTSLVDKANYRHFMAKEIHEQPEVVGHTLARYVDMATERVSLPVKLPFDFKNIQRINITACGTASYAGFVAKYWFERFARLPVEVDVASEFRYREAPLRKGDLAIFISQSGETADTLAALRYAKAEGVHTVAVVNVPTSTIARESETVLPTLAGPEIGVASTKAFTCQLMVLANLAIAAGKARGELSDEDETKLVHGLVEIPRLMSDALTTELQIEKLAREIAKSRDVLYLGRGTSFPLALEGALKLKEISYIHAEGYAAGELKHGPIALIDETMPVVVIAPYDRVFEKTVSNMQEVAARGGKIILMTDAKGAEEATVESLVTIVMPDMAAAFTPMVYAVPVQLLAYHTAVIMGTDVDQPRNLAKSVTVE.

C2 serves as the catalytic Nucleophile; for GATase activity. Residues 2-217 enclose the Glutamine amidotransferase type-2 domain; the sequence is CGIVGILGRE…DGDWVVLTRN (216 aa). SIS domains follow at residues 284–423 and 456–598; these read LPFD…ARGE and LARE…VDQP. Catalysis depends on K603, which acts as the For Fru-6P isomerization activity.

As to quaternary structure, homodimer.

Its subcellular location is the cytoplasm. The catalysed reaction is D-fructose 6-phosphate + L-glutamine = D-glucosamine 6-phosphate + L-glutamate. In terms of biological role, catalyzes the first step in hexosamine metabolism, converting fructose-6P into glucosamine-6P using glutamine as a nitrogen source. The polypeptide is Glutamine--fructose-6-phosphate aminotransferase [isomerizing] (glmS) (Bradyrhizobium diazoefficiens (strain JCM 10833 / BCRC 13528 / IAM 13628 / NBRC 14792 / USDA 110)).